A 153-amino-acid chain; its full sequence is Inner membrane protein YjiG (153 aa).

Residues 1 to 31 (MTTQVRKNVMDMFIDGARRGFTIATTNLLPN) lie on the Periplasmic side of the membrane. A helical transmembrane segment spans residues 32–52 (VVMAFVIIQALKITGLLDWVG). Residues 53–68 (HICEPVMALWGLPGEA) lie on the Cytoplasmic side of the membrane. A run of 2 helical transmembrane segments spans residues 69–89 (ATVL…AASL) and 90–110 (ATAG…MYLM). At 111 to 132 (GNPVQNVGRCLGTAEVNAKYYP) the chain is on the cytoplasmic side. The chain crosses the membrane as a helical span at residues 133–153 (HIITVCVINALLSIWVMQLIV).

The protein belongs to the SpmB family.

It localises to the cell inner membrane. This is Inner membrane protein YjiG (yjiG) from Escherichia coli O157:H7.